A 276-amino-acid chain; its full sequence is MVLASISEALISQGDGGERVAKRQRSAIVLLDLDILDCPICCEALTSPIFQCDNGHLACGSCCPKLSNKCPACTLPVGHSRSRAMESVLESILIPCPNVRFGCTKSFFYGKESAHEKECIFSQCSCPSSVCDYTGSYKDLYAHYKLTHSTNIFWNIKRFRCANFFTTSMLISDKILIKRVHEKKLLLAVQCFREPCGVYVTVSFIAPSAPEVGEFSYQLSYNVDGHTVTYESPEVKRVCKVSIETPQENFMLIPHSLLRGDLLEMQVFIIENVDQE.

The segment at 38 to 74 (CPICCEALTSPIFQCDNGHLACGSCCPKLSNKCPACT) adopts an RING-type zinc-finger fold. Residues 88 to 274 (VLESILIPCP…MQVFIIENVD (187 aa)) are SBD. The SIAH-type zinc-finger motif lies at 91 to 149 (SILIPCPNVRFGCTKSFFYGKESAHEKECIFSQCSCPSSVCDYTGSYKDLYAHYKLTHS). Zn(2+)-binding residues include C96, C103, H115, C119, C126, C131, H143, and H148.

It belongs to the SINA (Seven in absentia) family.

The catalysed reaction is S-ubiquitinyl-[E2 ubiquitin-conjugating enzyme]-L-cysteine + [acceptor protein]-L-lysine = [E2 ubiquitin-conjugating enzyme]-L-cysteine + N(6)-ubiquitinyl-[acceptor protein]-L-lysine.. It participates in protein modification; protein ubiquitination. E3 ubiquitin-protein ligase that mediates ubiquitination and subsequent proteasomal degradation of target proteins. E3 ubiquitin ligases accept ubiquitin from an E2 ubiquitin-conjugating enzyme in the form of a thioester and then directly transfers the ubiquitin to targeted substrates. It probably triggers the ubiquitin-mediated degradation of different substrates. The sequence is that of Putative E3 ubiquitin-protein ligase SINA-like 9 from Arabidopsis thaliana (Mouse-ear cress).